The following is a 973-amino-acid chain: UvrABC system protein A (973 aa).

34-41 serves as a coordination point for ATP; it reads GLSGSGKS. 2 consecutive ABC transporter domains span residues 331-609 and 629-958; these read WAKS…PKSL and PKKG…HFLK. Position 662–669 (662–669) interacts with ATP; sequence GVSGGGKS. The segment at 761-787 adopts a C4-type zinc-finger fold; that stretch reads CEACQGDGVIKIEMHFLPDVYVTCDVC.

The protein belongs to the ABC transporter superfamily. UvrA family. Forms a heterotetramer with UvrB during the search for lesions.

It is found in the cytoplasm. In terms of biological role, the UvrABC repair system catalyzes the recognition and processing of DNA lesions. UvrA is an ATPase and a DNA-binding protein. A damage recognition complex composed of 2 UvrA and 2 UvrB subunits scans DNA for abnormalities. When the presence of a lesion has been verified by UvrB, the UvrA molecules dissociate. This Agrobacterium fabrum (strain C58 / ATCC 33970) (Agrobacterium tumefaciens (strain C58)) protein is UvrABC system protein A.